Consider the following 340-residue polypeptide: NAD-dependent epimerase/dehydratase terH (340 aa).

Residues 7-27 form a helical membrane-spanning segment; the sequence is IVPPGGLVLVTGVTGFIGSYI. A glycan (N-linked (GlcNAc...) asparagine) is linked at Asn139. Tyr176 is a binding site for NADP(+).

Belongs to the NAD(P)-dependent epimerase/dehydratase family. Dihydroflavonol-4-reductase subfamily.

The protein localises to the membrane. In terms of biological role, NAD-dependent epimerase/dehydratase; part of the gene cluster that mediates the biosynthesis of terrein, a fungal metabolite with ecological, antimicrobial, antiproliferative, and antioxidative activities. The first step in the pathway is performed by the polyketide synthase terA that produces 4-hydroxy-6-methylpyranon (4-HMP), orsellinic acid (OA), and 2,3-dehydro-6-hydroxymellein (2,3-dehydro-6-HM) by condensing acetyl-CoA with two, three, or four malonyl-CoA units, respectively. 4-HMP and OA are not pathway intermediates, but are rather shunt or side products. 2,3-dehydro-6-HM is further converted to 6-hydroxymellein (6-HM) by the 6-hydroxymellein synthase terB. The monooxygenases terC and terD, the multicopper oxidase terE and the Kelch-like protein terF are then involved in the transformation of 6-HM to terrein. Even if they are co-regulated with the other terrein cluster genes, terH and terI seem to be dispensable for terrein production; whereas one or both of the 2 transporters terG and terJ are probably required for efficient secretion of metabolites. This Aspergillus terreus (strain NIH 2624 / FGSC A1156) protein is NAD-dependent epimerase/dehydratase terH.